Consider the following 455-residue polypeptide: ATP-dependent protease ATPase subunit HslU (455 aa).

ATP-binding positions include V23, 65–70 (GVGKTE), D266, E333, and R405.

The protein belongs to the ClpX chaperone family. HslU subfamily. A double ring-shaped homohexamer of HslV is capped on each side by a ring-shaped HslU homohexamer. The assembly of the HslU/HslV complex is dependent on binding of ATP.

It is found in the cytoplasm. ATPase subunit of a proteasome-like degradation complex; this subunit has chaperone activity. The binding of ATP and its subsequent hydrolysis by HslU are essential for unfolding of protein substrates subsequently hydrolyzed by HslV. HslU recognizes the N-terminal part of its protein substrates and unfolds these before they are guided to HslV for hydrolysis. This is ATP-dependent protease ATPase subunit HslU from Xanthomonas euvesicatoria pv. vesicatoria (strain 85-10) (Xanthomonas campestris pv. vesicatoria).